Here is a 355-residue protein sequence, read N- to C-terminus: Epoxide hydrolase 2 (355 aa).

An AB hydrolase-1 domain is found at Val78–Gln323. The active-site Nucleophile is Asp152. Tyr263 functions as the Proton donor in the catalytic mechanism. Residue His319 is the Proton acceptor of the active site.

The protein belongs to the AB hydrolase superfamily. Epoxide hydrolase family.

The enzyme catalyses an epoxide + H2O = an ethanediol. It participates in lipid metabolism. Functionally, catalyzes the hydrolysis of epoxide-containing fatty acids. Active in vitro against trans-1,3-diphenylpropene oxide (t-DPPO), epoxyeicosatrienoic acids (EETs) including 8,9-EET, 11,12-EET and 14,15-EET and the linoleic acid metabolites 12,13-epoxy-9-octadecenoate (12,13-EpOME) and 9,10-epoxy-12-octadecenoate (9,10-EpOME). The chain is Epoxide hydrolase 2 from Caenorhabditis elegans.